The primary structure comprises 513 residues: Na(+)/H(+) antiporter NhaB (513 aa).

12 helical membrane passes run 23–43 (LALIIFLIVNPLIFLISPFVA), 52–72 (IFTLAMALKCYPLLPGGLLAI), 97–117 (LLLMFMVAGIYFMKQLLLFIF), 120–140 (LLLSIRSKMLLSLSFCVAAAF), 144–164 (FLDALTVVAVVISVAVGFYGI), 202–222 (LMMHAGVGTALGGVMTMVGEP), 238–258 (FFLRMSPVTVPVLICGLLTCL), 303–323 (AIIGVWLVTALALHLAEVGLI), 348–368 (TESLPFTALLTVFFSVVAVII), 391–411 (LFYIFNGLLSSISDNVFVGTI), 447–467 (ATPNGQAAFLFLLTSALAPLI), and 475–495 (VWMALPYTLVLTLVGLLCVEF).

This sequence belongs to the NhaB Na(+)/H(+) (TC 2.A.34) antiporter family.

It localises to the cell inner membrane. It carries out the reaction 2 Na(+)(in) + 3 H(+)(out) = 2 Na(+)(out) + 3 H(+)(in). Na(+)/H(+) antiporter that extrudes sodium in exchange for external protons. The sequence is that of Na(+)/H(+) antiporter NhaB from Escherichia coli (strain 55989 / EAEC).